A 398-amino-acid polypeptide reads, in one-letter code: Phosphoglycerate kinase (398 aa).

Substrate-binding positions include 21–23 (DFN), R36, 59–62 (HLGR), R119, and R157. ATP is bound by residues K208, G296, E327, and 354-357 (GGDS).

It belongs to the phosphoglycerate kinase family. As to quaternary structure, monomer.

Its subcellular location is the cytoplasm. It catalyses the reaction (2R)-3-phosphoglycerate + ATP = (2R)-3-phospho-glyceroyl phosphate + ADP. It participates in carbohydrate degradation; glycolysis; pyruvate from D-glyceraldehyde 3-phosphate: step 2/5. The protein is Phosphoglycerate kinase (pgk) of Streptococcus pyogenes serotype M1.